A 197-amino-acid chain; its full sequence is Probable GTP-binding protein EngB (197 aa).

Residues 22 to 195 form the EngB-type G domain; sequence ALPELALVGR…WQWIEERTGV (174 aa). GTP-binding positions include 30–37, 57–61, 75–78, 142–145, and 174–176; these read GRSNVGKS, GKTQT, DVPG, TKVD, and FSA. Mg(2+) contacts are provided by serine 37 and threonine 59.

Belongs to the TRAFAC class TrmE-Era-EngA-EngB-Septin-like GTPase superfamily. EngB GTPase family. Mg(2+) is required as a cofactor.

Its function is as follows. Necessary for normal cell division and for the maintenance of normal septation. This Limosilactobacillus fermentum (strain NBRC 3956 / LMG 18251) (Lactobacillus fermentum) protein is Probable GTP-binding protein EngB.